Reading from the N-terminus, the 83-residue chain is Mu-theraphotoxin-Hhn2b 2 (83 aa).

An N-terminal signal peptide occupies residues 1 to 21 (MKASMFLALAGLVLLFVVCYA). The propeptide occupies 22-48 (SESEEKEFPRELISKIFTVDDFKGEER). 3 disulfide bridges follow: Cys50–Cys65, Cys57–Cys70, and Cys64–Cys77. Position 81 is a leucine amide (Leu81).

The protein belongs to the neurotoxin 10 (Hwtx-1) family. 14 (Hntx-1) subfamily. As to quaternary structure, monomer. Expressed by the venom gland.

The protein resides in the secreted. Its function is as follows. Weakly blocks the rat SCN2A/SCN1B (Nav1.2/beta-1) sodium channel (IC(50)=68 uM) and the insect sodium channel para/tipE (IC(50)=4.3 uM), without altering the activation or inactivation kinetics (depressant toxin). The sequence is that of Mu-theraphotoxin-Hhn2b 2 from Cyriopagopus hainanus (Chinese bird spider).